We begin with the raw amino-acid sequence, 314 residues long: MTAASGIGLATITADGTVLDTWFPAPELSASGPAGTARLTGDDVPADLAALTGKDEDRDVEVVAVRTTIADLNDKPADTHDVWLRLHLLSHRLTKPHEANLDGIFGLLSNVVWTNFGPCAVEGFETTRARLRKRGAVAVYGIDKFPRMVDYVTPSGVRIADADRVRLGAHLASGTTVMHEGFVNFNAGTLGTSMVEGRISAGVVVDDGSDIGGGASIMGTLSGGGKEVIKVGKRCLLGANSGLGISLGDDCVVEAGLYVTGGTKVTTADGQVTKAIELSGASNLLFRRNSLSGAVEVVKRDGTGITLNEALHAN.

Positions 163 and 180 each coordinate Mg(2+). Catalysis depends on glutamate 196, which acts as the Acyl-anhydride intermediate. Succinyl-CoA contacts are provided by residues arginine 198, glycine 213, serine 216, alanine 239, 254-255, glycine 262, lysine 274, and 287-290; these read EA and RRNS.

It belongs to the type 2 tetrahydrodipicolinate N-succinyltransferase family. In terms of assembly, homotrimer.

The protein localises to the cytoplasm. It carries out the reaction (S)-2,3,4,5-tetrahydrodipicolinate + succinyl-CoA + H2O = (S)-2-succinylamino-6-oxoheptanedioate + CoA. Its pathway is amino-acid biosynthesis; L-lysine biosynthesis via DAP pathway; LL-2,6-diaminopimelate from (S)-tetrahydrodipicolinate (succinylase route): step 1/3. In terms of biological role, catalyzes the conversion of the cyclic tetrahydrodipicolinate (THDP) into the acyclic N-succinyl-L-2-amino-6-oxopimelate using succinyl-CoA. This is 2,3,4,5-tetrahydropyridine-2,6-dicarboxylate N-succinyltransferase from Mycolicibacterium smegmatis (strain ATCC 700084 / mc(2)155) (Mycobacterium smegmatis).